We begin with the raw amino-acid sequence, 166 residues long: Cyclic pyranopterin monophosphate synthase (166 aa).

Substrate contacts are provided by residues Leu75–His77 and Met113–Glu114. The active site involves Asp128.

It belongs to the MoaC family. In terms of assembly, homohexamer; trimer of dimers.

It carries out the reaction (8S)-3',8-cyclo-7,8-dihydroguanosine 5'-triphosphate = cyclic pyranopterin phosphate + diphosphate. The protein operates within cofactor biosynthesis; molybdopterin biosynthesis. Catalyzes the conversion of (8S)-3',8-cyclo-7,8-dihydroguanosine 5'-triphosphate to cyclic pyranopterin monophosphate (cPMP). This chain is Cyclic pyranopterin monophosphate synthase, found in Thermomicrobium roseum (strain ATCC 27502 / DSM 5159 / P-2).